Reading from the N-terminus, the 805-residue chain is MSDIDRGLFERVLPARIRGSYAAKFNVLLLVVVIIVAAAGGYIHLQTQSTVGENTERRVSGIAEQQAATLHDWLTQKESTTTFLASNIGGDAVRTSDVKPQLERQLATLQQDVRAIHVVSTSQDTVVASTDDARSGTTLQAGDAPWLSTIEDGTTDVSVSDPYEVDDSPVVAMTAPTDKPGWVLVMTMSLAQHSQSFNSPIATGDVKVVNGDGVITLDNRNRALLEQYTDTAGNVPAAVATARSGQTVYNTEPERTGMDDGRYATAYTPVAGTDWVLTYHVPRGQAYALQSEVTQNLAGLVVVALVGLLLVGLTVGRRTSSALDELAGVAAAIADGDLDTTIPDTDRTDELGQLVGAFGEMQTYLTTAASQADALADQNFDADVLDEDLPGAFGASLSQMHTRLEALITDLDEAREDAEQTRKDAEEARAASERLNERLERRAAEYSDEMAAAAAGDLTRRLDEDVDSEPMQDIAEAFNDMMGDVEATLAQVRSIADAVDAASTDVSTSAAEIRSASDQVSESVQDISADADQQRDRLGTVGDEVTSLSATVEEIAASADDVAETVNQAATESERGQELGEDAVAELERIEATADSAVERVTALEEAVDAIGDVTGVITDIAEQTNMLALNANIEAARADKSGDGFAVVADEVKDLADEVKESATEIETLVDDVQADVADTVADMSELGDRVDAGSETIEAALAALDDIGDQVEAANGSVQSISDATDEQAASTEEVVTMIDEVTDLSDRTATESQQVSAAAEEQAASVSEVAGRADDLDDQVSTLNDLLDQFDARAASADTDEN.

The next 2 helical transmembrane spans lie at 25–45 (FNVL…YIHL) and 296–316 (NLAG…LTVG). 2 HAMP domains span residues 317 to 370 (RRTS…TAAS) and 437 to 490 (ERLE…ATLA). Positions 509-745 (SAAEIRSASD…EVVTMIDEVT (237 aa)) constitute a Methyl-accepting transducer domain. A disordered region spans residues 513 to 532 (IRSASDQVSESVQDISADAD). Residues 516 to 526 (ASDQVSESVQD) show a composition bias toward polar residues. Glutamate methyl ester (Glu) occurs at positions 554, 736, and 763. Positions 752–779 (ATESQQVSAAAEEQAASVSEVAGRADDL) are disordered. A compositionally biased stretch (low complexity) spans 754-773 (ESQQVSAAAEEQAASVSEVA).

It belongs to the methyl-accepting chemotaxis (MCP) protein family. As to quaternary structure, interacts with CheA, CheY, CheW1 and CheW2. Methylated by CheR.

The protein localises to the cell membrane. Mediates chemotaxis towards five attractant amino acids (leucine, isoleucine, valine, methionine and cysteine). Probably transduces the signal from the substrate-binding protein BasB to the histidine kinase CheA. In Halobacterium salinarum (strain ATCC 29341 / DSM 671 / R1), this protein is Transducer protein BasT (basT).